The primary structure comprises 127 residues: Large ribosomal subunit protein uL18 (127 aa).

It belongs to the universal ribosomal protein uL18 family. Part of the 50S ribosomal subunit; part of the 5S rRNA/L5/L18/L25 subcomplex. Contacts the 5S and 23S rRNAs.

In terms of biological role, this is one of the proteins that bind and probably mediate the attachment of the 5S RNA into the large ribosomal subunit, where it forms part of the central protuberance. This is Large ribosomal subunit protein uL18 from Streptomyces griseus subsp. griseus (strain JCM 4626 / CBS 651.72 / NBRC 13350 / KCC S-0626 / ISP 5235).